The sequence spans 629 residues: MGLEEQLRLLPDRPGCYLFKDASGRIIYVGKARNLKNRVRQYFQSSRNLTAKVLAMVGQIVEIEHIVTDTETEALVLESNLIKKHKPKYNIRLRDDKHYPYLRLTLTEQWPRLVVARSMKKDGSRYFGPYTSSQAMWETMKLARRLFPLRTCNDPSRYPRGCLQYHIGRCLGPCLPDFDRHREYAEAVRDLQAFLEGRTQEVLERLRARMEQAAERLEFERAAELRDQIRAIEKVTEKQKIIAHTMVDLDVIAYARLYDEAGVQVFFVRQGKLVGRDQFLMSGADEMTGGEILAAFIQQHYSQTDFVPKEILVSEDLPDADVIAEWLSAKRGSRVALRCPKRGEKRALVEMVAQNAQEAMTERRQQRELELAATEGVLRELQAYLDLPRLPHRIECFDVSHVQGAEVVASMVVFEGGRPKKSDYRRFKMKVDQNNDFANMAEAVGRRFRRGLAERAAQVEGRVRDLEEGRVAEGGAEYGGKFADFPDLLIIDGGKGQLSYARAVMRELGVDHIPTFGLAKENELLCTEDRPDWIELPRGSQALFLLQRIRDEAHRFAITYHRKLHRRASTHSRLDDVPGIGPKRKKALLQHFGSLKAIREASVEEVAQVPGITLELAERVKEALGGPMR.

In terms of domain architecture, GIY-YIG spans 12–91 (DRPGCYLFKD…IKKHKPKYNI (80 aa)). Residues 200 to 235 (QEVLERLRARMEQAAERLEFERAAELRDQIRAIEKV) form the UVR domain.

This sequence belongs to the UvrC family. Interacts with UvrB in an incision complex.

It is found in the cytoplasm. The UvrABC repair system catalyzes the recognition and processing of DNA lesions. UvrC both incises the 5' and 3' sides of the lesion. The N-terminal half is responsible for the 3' incision and the C-terminal half is responsible for the 5' incision. The polypeptide is UvrABC system protein C (Symbiobacterium thermophilum (strain DSM 24528 / JCM 14929 / IAM 14863 / T)).